Here is a 370-residue protein sequence, read N- to C-terminus: D-aspartate oxidase (370 aa).

The N-terminal stretch at 1 to 18 is a signal peptide; the sequence is MPPRIIILGAGIIGLSTA. The FAD site is built by I13, E42, A63, S64, and G68. The N-linked (GlcNAc...) asparagine glycan is linked to N207. FAD-binding residues include R308, G338, and Y339.

The protein belongs to the DAMOX/DASOX family. As to quaternary structure, monomer. Requires FAD as cofactor.

It catalyses the reaction D-aspartate + O2 + H2O = oxaloacetate + H2O2 + NH4(+). The enzyme catalyses D-glutamate + O2 + H2O = H2O2 + 2-oxoglutarate + NH4(+). In terms of biological role, selectively catalyzes the oxidative deamination of acidic amino acids. Protects the organism from the toxicity of D-amino acids. Enables the organism to utilize D-amino acids as a source of nutrients. The chain is D-aspartate oxidase from Talaromyces thermophilus.